We begin with the raw amino-acid sequence, 189 residues long: NADH-quinone oxidoreductase subunit B (189 aa).

[4Fe-4S] cluster contacts are provided by C39, C40, C104, and C135.

The protein belongs to the complex I 20 kDa subunit family. NDH-1 is composed of 14 different subunits. Subunits NuoB, C, D, E, F, and G constitute the peripheral sector of the complex. [4Fe-4S] cluster is required as a cofactor.

It localises to the cell inner membrane. It carries out the reaction a quinone + NADH + 5 H(+)(in) = a quinol + NAD(+) + 4 H(+)(out). In terms of biological role, NDH-1 shuttles electrons from NADH, via FMN and iron-sulfur (Fe-S) centers, to quinones in the respiratory chain. The immediate electron acceptor for the enzyme in this species is believed to be a menaquinone. Couples the redox reaction to proton translocation (for every two electrons transferred, four hydrogen ions are translocated across the cytoplasmic membrane), and thus conserves the redox energy in a proton gradient. This is NADH-quinone oxidoreductase subunit B from Chlorobium limicola (strain DSM 245 / NBRC 103803 / 6330).